We begin with the raw amino-acid sequence, 622 residues long: ABC transporter permease protein YxdM (622 aa).

10 consecutive transmembrane segments (helical) span residues 20 to 40 (AFFLSSAFSVLIFFTFAMFLF), 56 to 76 (GLTAAEWMIFVFSFLFVLYSV), 118 to 138 (AGIIGGFIFSKTFFTVGAYIL), 154 to 174 (ITACGFLLLFFFLSQFTILFV), 195 to 215 (PSVLLSLFGIACLCGGYGMVL), 219 to 239 (VHGAEPFIILLLTVIGTYFFF), 279 to 299 (LFFIVSIISAVAFTATGVLAM), 498 to 518 (TVQLPSLSLFIGLFIAIVFFV), 558 to 578 (IQLAILFFFPFVIAVMHTLFA), and 590 to 610 (VAGPLSLTIGGFFIFQLLFFL).

It belongs to the ABC-4 integral membrane protein family. In terms of assembly, the complex is composed of two ATP-binding proteins (YxdL) and two transmembrane proteins (YxdM).

The protein resides in the cell membrane. Functionally, part of the ABC transporter complex YxdLM which could be involved in peptide resistance. This is ABC transporter permease protein YxdM (yxdM) from Bacillus subtilis (strain 168).